Consider the following 154-residue polypeptide: Cyanate hydratase (154 aa).

Catalysis depends on residues R100, E103, and S126.

It belongs to the cyanase family.

The enzyme catalyses cyanate + hydrogencarbonate + 3 H(+) = NH4(+) + 2 CO2. Functionally, catalyzes the reaction of cyanate with bicarbonate to produce ammonia and carbon dioxide. This Aspergillus fumigatus (strain CBS 144.89 / FGSC A1163 / CEA10) (Neosartorya fumigata) protein is Cyanate hydratase.